Consider the following 427-residue polypeptide: Enolase (427 aa).

Residue Gln163 participates in (2R)-2-phosphoglycerate binding. The active-site Proton donor is the Glu205. Residues Asp242, Glu285, and Asp312 each coordinate Mg(2+). Residues Lys337, Arg366, Ser367, and Lys388 each contribute to the (2R)-2-phosphoglycerate site. Lys337 functions as the Proton acceptor in the catalytic mechanism.

This sequence belongs to the enolase family. It depends on Mg(2+) as a cofactor.

The protein resides in the cytoplasm. Its subcellular location is the secreted. It localises to the cell surface. The catalysed reaction is (2R)-2-phosphoglycerate = phosphoenolpyruvate + H2O. It functions in the pathway carbohydrate degradation; glycolysis; pyruvate from D-glyceraldehyde 3-phosphate: step 4/5. Its function is as follows. Catalyzes the reversible conversion of 2-phosphoglycerate (2-PG) into phosphoenolpyruvate (PEP). It is essential for the degradation of carbohydrates via glycolysis. The protein is Enolase of Thiobacillus denitrificans (strain ATCC 25259 / T1).